Here is a 135-residue protein sequence, read N- to C-terminus: RxLR effector protein PITG_02860 (135 aa).

Positions 1-18 (MRLAFLLLAVSHFICGNA) are cleaved as a signal peptide. Positions 48–64 (RKLLRTDERLSEANEER) match the RxLR-dEER motif. Residues 126-135 (LKDPQAFRGP) form an NRL1-binding domain region.

It belongs to the RxLR effector family. In terms of assembly, interacts with host ubiquitin E3 ligase NRL1.

It is found in the secreted. The protein localises to the host cytoplasm. The protein resides in the host nucleus. It localises to the host nucleoplasm. Functionally, effector that promotes P.infestans virulence and suppresses pattern-triggered immunity (PTI). Interacts with the host ubiquitin E3 ligase NRL1 and enhances the association between NRL1 and SWAP70 to promote proteasome-mediated degradation of SWAP70, which results in the suppression of immunity. The chain is RxLR effector protein PITG_02860 from Phytophthora infestans (strain T30-4) (Potato late blight agent).